A 213-amino-acid chain; its full sequence is Regulatory protein RecX (213 aa).

Belongs to the RecX family.

The protein localises to the cytoplasm. Modulates RecA activity. This Clostridium beijerinckii (strain ATCC 51743 / NCIMB 8052) (Clostridium acetobutylicum) protein is Regulatory protein RecX.